We begin with the raw amino-acid sequence, 289 residues long: Iodotyrosine deiodinase 1 (289 aa).

The chain crosses the membrane as a helical span at residues 1-21 (MFLLTPVLVAVVCILMVWIFK). FMN is bound by residues 100 to 104 (RRSVR) and 128 to 129 (SG). Positions 130, 157, 161, and 182 each coordinate 3,5-diiodo-L-tyrosine. 3-iodo-L-tyrosine-binding residues include alanine 130, glutamate 157, tyrosine 161, and lysine 182. Residues 237–239 (TTT) and arginine 279 contribute to the FMN site.

The protein belongs to the nitroreductase family. As to quaternary structure, homodimer. Requires FMN as cofactor. As to expression, detected in thyroid (at protein level).

It localises to the cell membrane. Its subcellular location is the cytoplasmic vesicle membrane. The enzyme catalyses 2 iodide + L-tyrosine + 2 NADP(+) = 3,5-diiodo-L-tyrosine + 2 NADPH + H(+). It carries out the reaction iodide + L-tyrosine + NADP(+) = 3-iodo-L-tyrosine + NADPH. It catalyses the reaction 3-iodo-L-tyrosine + iodide + NADP(+) = 3,5-diiodo-L-tyrosine + NADPH + H(+). The catalysed reaction is L-tyrosine + chloride + NADP(+) = 3-chloro-L-tyrosine + NADPH. The enzyme catalyses bromide + L-tyrosine + NADP(+) = 3-bromo-L-tyrosine + NADPH. In terms of biological role, catalyzes the dehalogenation of halotyrosines such as 3-bromo-L-tyrosine, 3-chloro-L-tyrosine, 3-iodo-L-tyrosine and 3,5-diiodo-L-tyrosine. During thyroid hormone biosynthesis, facilitates iodide salvage by catalysing the oxidative NADPH-dependent deiodination of the halogenated by-products of thyroid hormone production, monoiodotyrosine (L-MIT) and diiodotyrosine (L-DIT). The scavanged iodide can then reenter the hormone-producing pathways. Acts more efficiently on 3-iodo-L-tyrosine than 3,5-diiodo-L-tyrosine. This chain is Iodotyrosine deiodinase 1 (IYD), found in Sus scrofa (Pig).